Reading from the N-terminus, the 163-residue chain is Cyanate hydratase (163 aa).

Residues Arg-103, Glu-106, and Ser-129 contribute to the active site.

Belongs to the cyanase family.

The catalysed reaction is cyanate + hydrogencarbonate + 3 H(+) = NH4(+) + 2 CO2. Functionally, catalyzes the reaction of cyanate with bicarbonate to produce ammonia and carbon dioxide. The polypeptide is Cyanate hydratase (Talaromyces marneffei (strain ATCC 18224 / CBS 334.59 / QM 7333) (Penicillium marneffei)).